The sequence spans 73 residues: RNA-binding protein Hfq (73 aa).

Residues 8 to 68 (DQFLNQIRKE…ISTFAPQKNV (61 aa)) form the Sm domain.

This sequence belongs to the Hfq family. In terms of assembly, homohexamer.

RNA chaperone that binds small regulatory RNA (sRNAs) and mRNAs to facilitate mRNA translational regulation in response to envelope stress, environmental stress and changes in metabolite concentrations. Also binds with high specificity to tRNAs. This Bacillus subtilis (strain 168) protein is RNA-binding protein Hfq.